The sequence spans 79 residues: MAVKLKLTRLGSKKHPFYRVVAATDETRRDGRPLEFLGYYNPMTDPVEVKLDADKIKEWLARGAEPTDTVRALIKKHMA.

The protein belongs to the bacterial ribosomal protein bS16 family.

This Desulfovibrio desulfuricans (strain ATCC 27774 / DSM 6949 / MB) protein is Small ribosomal subunit protein bS16.